A 323-amino-acid polypeptide reads, in one-letter code: Large ribosomal subunit protein uL10x (323 aa).

The tract at residues 287–323 is disordered; the sequence is DAGGGSAQAGAAAKVEEKKEESDEEDYEGGFGLFDEE. Serine 308 carries the post-translational modification Phosphoserine. Residues 308-323 are compositionally biased toward acidic residues; sequence SDEEDYEGGFGLFDEE. Residue tyrosine 313 is modified to Phosphotyrosine.

The protein belongs to the universal ribosomal protein uL10 family. As to quaternary structure, P0 forms a pentameric complex by interaction with dimers of P1 and P2.

In terms of biological role, ribosomal protein P0 is the functional equivalent of E.coli protein L10. This chain is Large ribosomal subunit protein uL10x (RPP0C), found in Arabidopsis thaliana (Mouse-ear cress).